Consider the following 742-residue polypeptide: Condensin complex subunit 2 (742 aa).

Disordered stretches follow at residues 1-62, 151-172, 452-473, and 564-604; these read MKRA…FNSS, QQTE…KKER, FNSS…STER, and IQPH…PSSS. Residues 21 to 39 show a composition bias toward basic and acidic residues; it reads ALEKKRAKENSRKQRELRR. Residues 53 to 62 are compositionally biased toward polar residues; sequence LNNSSPFNSS. The segment covering 154 to 165 has biased composition (acidic residues); that stretch reads EEGEDAENDDED. 2 stretches are compositionally biased toward polar residues: residues 452–470 and 592–604; these read FNSS…SLSS and PKQT…PSSS.

The protein belongs to the CND2 (condensin subunit 2) family. Component of the condensin complex, which contains the cut14/smc2 and cut3/smc2 heterodimer, and three non SMC subunits that probably regulate the complex: cnd1, cnd2 and cnd3.

It localises to the nucleus. Its subcellular location is the cytoplasm. The protein resides in the chromosome. Regulatory subunit of the condensin complex, a complex required for conversion of interphase chromatin into mitotic-like condense chromosomes. The condensin complex probably introduces positive supercoils into relaxed DNA in the presence of type I topoisomerases and converts nicked DNA into positive knotted forms in the presence of type II topoisomerases. The condensin complex probably also plays a role during interphase in processes such as DNA repair. This Schizosaccharomyces pombe (strain 972 / ATCC 24843) (Fission yeast) protein is Condensin complex subunit 2 (cnd2).